Here is a 450-residue protein sequence, read N- to C-terminus: Phosphoglucosamine mutase (450 aa).

Ser-102 acts as the Phosphoserine intermediate in catalysis. Residues Ser-102, Asp-244, Asp-246, and Asp-248 each coordinate Mg(2+). Position 102 is a phosphoserine (Ser-102).

Belongs to the phosphohexose mutase family. Mg(2+) serves as cofactor. In terms of processing, activated by phosphorylation.

It catalyses the reaction alpha-D-glucosamine 1-phosphate = D-glucosamine 6-phosphate. Functionally, catalyzes the conversion of glucosamine-6-phosphate to glucosamine-1-phosphate. This chain is Phosphoglucosamine mutase, found in Nitratidesulfovibrio vulgaris (strain ATCC 29579 / DSM 644 / CCUG 34227 / NCIMB 8303 / VKM B-1760 / Hildenborough) (Desulfovibrio vulgaris).